We begin with the raw amino-acid sequence, 416 residues long: Histidine--tRNA ligase (416 aa).

The protein belongs to the class-II aminoacyl-tRNA synthetase family.

The protein localises to the cytoplasm. It carries out the reaction tRNA(His) + L-histidine + ATP = L-histidyl-tRNA(His) + AMP + diphosphate + H(+). This chain is Histidine--tRNA ligase (hisS), found in Methanocaldococcus jannaschii (strain ATCC 43067 / DSM 2661 / JAL-1 / JCM 10045 / NBRC 100440) (Methanococcus jannaschii).